We begin with the raw amino-acid sequence, 138 residues long: Putative nickel-responsive regulator (138 aa).

Positions 78, 89, 91, and 97 each coordinate Ni(2+).

This sequence belongs to the transcriptional regulatory CopG/NikR family. Ni(2+) is required as a cofactor.

Transcriptional regulator. The chain is Putative nickel-responsive regulator from Pyrococcus horikoshii (strain ATCC 700860 / DSM 12428 / JCM 9974 / NBRC 100139 / OT-3).